A 348-amino-acid polypeptide reads, in one-letter code: NADH-ubiquinone oxidoreductase chain 2 (348 aa).

10 consecutive transmembrane segments (helical) span residues 3 to 23 (PFIL…TFAS), 24 to 44 (SHWL…IPLM), 60 to 80 (FITQ…NAWI), 95 to 115 (ASML…HFWL), 136 to 156 (LAPF…ITFL), 177 to 197 (ILAY…QFNQ), 198 to 218 (QLAL…FMIF), 239 to 259 (LTAI…LSGF), 273 to 293 (DIPL…YFYL), and 325 to 345 (LAIS…TLAL).

The protein belongs to the complex I subunit 2 family.

Its subcellular location is the mitochondrion inner membrane. The enzyme catalyses a ubiquinone + NADH + 5 H(+)(in) = a ubiquinol + NAD(+) + 4 H(+)(out). In terms of biological role, core subunit of the mitochondrial membrane respiratory chain NADH dehydrogenase (Complex I) that is believed to belong to the minimal assembly required for catalysis. Complex I functions in the transfer of electrons from NADH to the respiratory chain. The immediate electron acceptor for the enzyme is believed to be ubiquinone. This is NADH-ubiquinone oxidoreductase chain 2 (MT-ND2) from Gadus morhua (Atlantic cod).